The sequence spans 309 residues: Diadenylate cyclase (309 aa).

The region spanning 144-301 (TITLYELFET…DGKIVFETDP (158 aa)) is the DAC domain.

The protein belongs to the adenylate cyclase family. DacZ subfamily. Mn(2+) is required as a cofactor.

The enzyme catalyses 2 ATP = 3',3'-c-di-AMP + 2 diphosphate. Functionally, diadenylate cyclase that catalyzes the condensation of 2 ATP molecules into cyclic di-AMP (c-di-AMP). c-di-AMP is a second messenger for intracellular signal transduction involved in the control of important regulatory processes such as osmoregulation. The polypeptide is Diadenylate cyclase (Methanocaldococcus jannaschii (strain ATCC 43067 / DSM 2661 / JAL-1 / JCM 10045 / NBRC 100440) (Methanococcus jannaschii)).